The sequence spans 398 residues: Acetate kinase (398 aa).

Asn8 provides a ligand contact to Mg(2+). ATP is bound at residue Lys15. Position 89 (Arg89) interacts with substrate. Asp146 acts as the Proton donor/acceptor in catalysis. Residues 206–210, 283–285, and 331–335 contribute to the ATP site; these read HIGNG, DMR, and GMGEN. Glu383 contacts Mg(2+).

This sequence belongs to the acetokinase family. As to quaternary structure, homodimer. Mg(2+) is required as a cofactor. Mn(2+) serves as cofactor.

The protein resides in the cytoplasm. The enzyme catalyses acetate + ATP = acetyl phosphate + ADP. The protein operates within metabolic intermediate biosynthesis; acetyl-CoA biosynthesis; acetyl-CoA from acetate: step 1/2. Its function is as follows. Catalyzes the formation of acetyl phosphate from acetate and ATP. Can also catalyze the reverse reaction. The polypeptide is Acetate kinase (Streptococcus pyogenes serotype M5 (strain Manfredo)).